Consider the following 432-residue polypeptide: UDP-glucose 6-dehydrogenase (432 aa).

Residues 2 to 19 (NITF…GIIM), Val-11, Asp-30, Lys-35, Thr-121, and Glu-152 each bind NAD(+). Residues 148-152 (EFLRE), Lys-202, Asn-206, 247-251 (FLNAG), and Gly-255 contribute to the substrate site. Catalysis depends on Cys-258, which acts as the Nucleophile. Lys-261 contacts NAD(+). A substrate-binding site is contributed by Lys-319. NAD(+) is bound at residue Arg-326.

The protein belongs to the UDP-glucose/GDP-mannose dehydrogenase family.

The catalysed reaction is UDP-alpha-D-glucose + 2 NAD(+) + H2O = UDP-alpha-D-glucuronate + 2 NADH + 3 H(+). Its pathway is nucleotide-sugar biosynthesis; UDP-alpha-D-glucuronate biosynthesis; UDP-alpha-D-glucuronate from UDP-alpha-D-glucose: step 1/1. The sequence is that of UDP-glucose 6-dehydrogenase (udg) from Rickettsia conorii (strain ATCC VR-613 / Malish 7).